A 423-amino-acid polypeptide reads, in one-letter code: Aspartate aminotransferase, mitochondrial (423 aa).

The transit peptide at 1–22 (MALLQSRLLLSAPRRAAATARA) directs the protein to the mitochondrion. 3 residues coordinate substrate: Gly58, Trp155, and Asn208. Residue Lys272 is modified to N6-(pyridoxal phosphate)lysine. Arg400 contacts substrate.

This sequence belongs to the class-I pyridoxal-phosphate-dependent aminotransferase family. Homodimer. Requires pyridoxal 5'-phosphate as cofactor. Detected in heart (at protein level).

Its subcellular location is the mitochondrion matrix. It carries out the reaction L-aspartate + 2-oxoglutarate = oxaloacetate + L-glutamate. The enzyme catalyses L-kynurenine + 2-oxoglutarate = kynurenate + L-glutamate + H2O. In terms of biological role, catalyzes the irreversible transamination of the L-tryptophan metabolite L-kynurenine to form kynurenic acid (KA). As a member of the malate-aspartate shuttle, it has a key role in the intracellular NAD(H) redox balance. Is important for metabolite exchange between mitochondria and cytosol, and for amino acid metabolism. In Gallus gallus (Chicken), this protein is Aspartate aminotransferase, mitochondrial (GOT2).